We begin with the raw amino-acid sequence, 159 residues long: Phosphopantetheine adenylyltransferase (159 aa).

Thr10 is a substrate binding site. ATP-binding positions include 10–11 and His18; that span reads TF. Lys42, Met74, and Arg88 together coordinate substrate. ATP-binding positions include 89–91, Glu99, and 124–130; these read GLR and WSFISSS.

Belongs to the bacterial CoaD family. Homohexamer. Requires Mg(2+) as cofactor.

It is found in the cytoplasm. The catalysed reaction is (R)-4'-phosphopantetheine + ATP + H(+) = 3'-dephospho-CoA + diphosphate. Its pathway is cofactor biosynthesis; coenzyme A biosynthesis; CoA from (R)-pantothenate: step 4/5. Its function is as follows. Reversibly transfers an adenylyl group from ATP to 4'-phosphopantetheine, yielding dephospho-CoA (dPCoA) and pyrophosphate. The chain is Phosphopantetheine adenylyltransferase from Yersinia pseudotuberculosis serotype I (strain IP32953).